We begin with the raw amino-acid sequence, 319 residues long: Cell surface A33 antigen (319 aa).

Positions 1–21 (MLGKAGSVVWMLCAIWVAADA) are cleaved as a signal peptide. The Ig-like V-type domain maps to 22–134 (LTVETTQDIL…QDVNAKSRVR (113 aa)). The Extracellular portion of the chain corresponds to 22–235 (LTVETTQDIL…VAPRPPSMNI (214 aa)). 3 cysteine pairs are disulfide-bonded: C43–C117, C146–C222, and C162–C211. N-linked (GlcNAc...) asparagine glycosylation is found at N99, N112, N200, and N223. Positions 140-227 (PPSKPDCSIQ…GIESCNITVA (88 aa)) constitute an Ig-like C2-type domain. The helical transmembrane segment at 236–256 (ALYAGIAGGVFVALIIIGVIV) threads the bilayer. Residues 257 to 319 (YCCCCREKDD…GRSTPDQPFQ (63 aa)) are Cytoplasmic-facing. Composition is skewed to basic and acidic residues over residues 267–276 (KDQDREDARP) and 284–308 (PKKE…DRWS). A disordered region spans residues 267-319 (KDQDREDARPNRAAYQVPKKEQKEISRGREDEDDHRHEDRWSSGRSTPDQPFQ). The span at 309 to 319 (SGRSTPDQPFQ) shows a compositional bias: polar residues.

In terms of processing, palmitoylated.

The protein resides in the membrane. Functionally, may play a role in cell-cell recognition and signaling. The chain is Cell surface A33 antigen (Gpa33) from Mus musculus (Mouse).